Consider the following 189-residue polypeptide: Large ribosomal subunit protein bL25 (189 aa).

It belongs to the bacterial ribosomal protein bL25 family. CTC subfamily. As to quaternary structure, part of the 50S ribosomal subunit; part of the 5S rRNA/L5/L18/L25 subcomplex. Contacts the 5S rRNA. Binds to the 5S rRNA independently of L5 and L18.

In terms of biological role, this is one of the proteins that binds to the 5S RNA in the ribosome where it forms part of the central protuberance. This is Large ribosomal subunit protein bL25 from Azobacteroides pseudotrichonymphae genomovar. CFP2.